The primary structure comprises 540 residues: Zinc finger CCCH domain-containing protein 46 (540 aa).

The C3H1-type zinc finger occupies 148 to 175 (GFGGVPCSYFARGFCKNGASCRFVHSDG). The RRM domain maps to 258–334 (RQIYLTFPAD…RVLVKPYKEK (77 aa)). Basic and acidic residues-rich tracts occupy residues 337–351 (VPDK…EREL) and 436–450 (EYDG…SKEG). Disordered regions lie at residues 337 to 365 (VPDK…DVLG), 436 to 469 (EYDG…LPDS), and 490 to 514 (SDLW…SFNS). Ser451 bears the Phosphoserine mark. The segment covering 490–511 (SDLWSPSSDNDDNSTPSTLSDS) has biased composition (low complexity).

Possesses RNA-binding and ribonuclease activities in vitro. The polypeptide is Zinc finger CCCH domain-containing protein 46 (Arabidopsis thaliana (Mouse-ear cress)).